The following is a 761-amino-acid chain: Protein spire homolog 1 (761 aa).

Disordered regions lie at residues 1–23 and 160–183; these read MTDG…ARPE and DCPD…AEVS. Residues 36-223 form the KIND domain; sequence LCLEEILTLY…RALYAETKEL (188 aa). The segment covering 160–180 has biased composition (acidic residues); the sequence is DCPDEGYEATEEEDEGEEENA. Positions 218-246 form a coiled coil; the sequence is AETKELRTFLEKIKSAKENLRKMEGETEE. 2 consecutive WH2 domains span residues 295–313 and 359–376; these read PYEM…LRKV and LHER…LRPV. Disordered stretches follow at residues 375–406 and 419–539; these read PVSP…DIPD and ANGT…KSLA. The span at 469–480 shows a compositional bias: low complexity; it reads SSSSISTSLVED. Positions 504–520 are enriched in basic and acidic residues; it reads PDKRIAPQRRHSIEKEA. Residues 557–577 form a spir-box region; sequence LTLTVEEVMHIRQVLVKAELE. Disordered regions lie at residues 630–694 and 728–761; these read PSKP…DELE and STKR…IKEV. The span at 636-647 shows a compositional bias: low complexity; the sequence is SLPISSLGPSIL. Positions 682-693 are enriched in basic and acidic residues; it reads KHGDRSSSKDEL. Residues 728–739 show a composition bias toward basic residues; the sequence is STKRARLHRRTH. The span at 740-749 shows a compositional bias: low complexity; sequence SVYSSSTSSS.

The protein belongs to the spire family.

It is found in the cytoplasm. It localises to the cytoskeleton. The protein resides in the cytosol. Its subcellular location is the cleavage furrow. The protein localises to the perinuclear region. It is found in the cell membrane. It localises to the cytoplasmic vesicle membrane. In terms of biological role, acts as an actin nucleation factor, remains associated with the slow-growing pointed end of the new filament. Involved in intracellular vesicle transport along actin fibers, providing a novel link between actin cytoskeleton dynamics and intracellular transport. Required for asymmetric spindle positioning and asymmetric cell division during meiosis. Required for normal formation of the cleavage furrow and for polar body extrusion during female germ cell meiosis. Also acts in the nucleus: together with FMN2, promotes assembly of nuclear actin filaments in response to DNA damage in order to facilitate movement of chromatin and repair factors after DNA damage. In addition, promotes innate immune signaling downstream of dsRNA sensing. Mechanistically, contributes to IRF3 phosphorylation and activation downstream of MAVS and upstream of TBK1. In Danio rerio (Zebrafish), this protein is Protein spire homolog 1.